Consider the following 210-residue polypeptide: Ribosomal RNA large subunit methyltransferase E (210 aa).

Residues Gly-61, Trp-63, Asp-81, Asp-97, and Asp-122 each contribute to the S-adenosyl-L-methionine site. The active-site Proton acceptor is Lys-162. A compositionally biased stretch (basic and acidic residues) spans 187-196; sequence KPEASRKRSP. A disordered region spans residues 187 to 210; that stretch reads KPEASRKRSPEVYALGQGKRAHMK.

This sequence belongs to the class I-like SAM-binding methyltransferase superfamily. RNA methyltransferase RlmE family.

It localises to the cytoplasm. The enzyme catalyses uridine(2552) in 23S rRNA + S-adenosyl-L-methionine = 2'-O-methyluridine(2552) in 23S rRNA + S-adenosyl-L-homocysteine + H(+). In terms of biological role, specifically methylates the uridine in position 2552 of 23S rRNA at the 2'-O position of the ribose in the fully assembled 50S ribosomal subunit. The chain is Ribosomal RNA large subunit methyltransferase E from Stenotrophomonas maltophilia (strain R551-3).